The following is a 244-amino-acid chain: Exosome complex component Rrp41 (244 aa).

The protein belongs to the RNase PH family. Rrp41 subfamily. In terms of assembly, component of the archaeal exosome complex. Forms a hexameric ring-like arrangement composed of 3 Rrp41-Rrp42 heterodimers. The hexameric ring associates with a trimer of Rrp4 and/or Csl4 subunits.

It localises to the cytoplasm. Catalytic component of the exosome, which is a complex involved in RNA degradation. Has 3'-&gt;5' exoribonuclease activity. Can also synthesize heteromeric RNA-tails. This chain is Exosome complex component Rrp41, found in Nitrosopumilus maritimus (strain SCM1).